Consider the following 129-residue polypeptide: Cytochrome b5 (129 aa).

A Cytochrome b5 heme-binding domain is found at 8-84; the sequence is TTIYTHEEVA…LEKLYIGNLK (77 aa). Heme contacts are provided by H43 and H67. The chain crosses the membrane as a helical span at residues 104 to 124; sequence GINFPLIAVGVFLAAFGVYYY.

It belongs to the cytochrome b5 family.

The protein localises to the endoplasmic reticulum membrane. It localises to the microsome membrane. Its function is as follows. Membrane bound hemoprotein which function as an electron carrier for several membrane bound oxygenases. This chain is Cytochrome b5 (Cytb5), found in Candida tropicalis (Yeast).